Here is a 942-residue protein sequence, read N- to C-terminus: Inter-alpha-trypsin inhibitor heavy chain H5 (942 aa).

The N-terminal stretch at 1–16 is a signal peptide; the sequence is MLLLLGLCLGLSLCVG. A VIT domain is found at 35–161; sequence VPRQVRLLQR…KAAFFLSYEE (127 aa). N-linked (GlcNAc...) asparagine glycans are attached at residues Asn-97 and Asn-127. Disordered regions lie at residues 116–136 and 208–227; these read KKSGDRVKEKRNKTTEENGEK and SRQRGSGRGEDDSGPPPSTV. N-linked (GlcNAc...) asparagine glycans are attached at residues Asn-231, Asn-421, and Asn-508. Residues 295–478 form the VWFA domain; the sequence is NVVFVLDSSA…SQLIGFYDEI (184 aa). Residues 550-571 are disordered; sequence QKAGKDVTGSPRPGGDGEGDTN. 3 N-linked (GlcNAc...) asparagine glycosylation sites follow: Asn-776, Asn-795, and Asn-862.

The protein belongs to the ITIH family. Abundantly expressed in placenta. Less abundant expression in mammary gland and ovary. Expression is barely detectable levels in all other tissues tested.

The protein localises to the secreted. Its function is as follows. May act as a tumor suppressor. The sequence is that of Inter-alpha-trypsin inhibitor heavy chain H5 (ITIH5) from Homo sapiens (Human).